Here is a 94-residue protein sequence, read N- to C-terminus: Small ribosomal subunit protein bS20 (94 aa).

Belongs to the bacterial ribosomal protein bS20 family.

In terms of biological role, binds directly to 16S ribosomal RNA. The sequence is that of Small ribosomal subunit protein bS20 from Symbiobacterium thermophilum (strain DSM 24528 / JCM 14929 / IAM 14863 / T).